The following is a 369-amino-acid chain: Protein V (369 aa).

Disordered regions lie at residues 1-23 (MDQDALISKEDSEVEREASGGRE) and 54-320 (INTL…GHRR). 4 stretches are compositionally biased toward basic and acidic residues: residues 7 to 20 (ISKEDSEVEREASG), 99 to 110 (AEAHARNVDKQN), 150 to 168 (GAEDENREMAANPDKRGED), and 175 to 193 (EEIRRSAPLPDEREGRADN). 3 positions are modified to phosphoserine; by host: S249, S257, and S260. Residues H318, C337, C341, C353, C355, C358, C362, and C365 each coordinate Zn(2+).

This sequence belongs to the paramyxoviruses V protein family. In terms of assembly, interacts with host IFIH1/MDA5 and DHX58/LGP2. Interacts with host IRF3. Interacts with host RIGI regulatory protein (via CARDs domain) and host TRIM25 (via SPRY domain); these interactions prevent TRIM25-mediated ubiquitination of RIG-I and disrupts downstream RIG-I signaling.

The protein resides in the host cytoplasm. Functionally, plays an essential role in the inhibition of host immune response. Prevents the establishment of cellular antiviral state by blocking interferon-alpha/beta (IFN-alpha/beta) production and signaling pathway. Interacts with host IFIH1/MDA5 and DHX58/LGP2 to inhibit the transduction pathway involved in the activation of IFN-beta promoter, thus protecting the virus against cell antiviral state. Also interacts with and inhibits host IRF3. Blocks the type I interferon signaling pathway by disrupting the RIG-I signaling pathway. The protein is Protein V (P/V/C) of Cavia cutleri (Guinea pig).